The following is a 238-amino-acid chain: ATP synthase subunit a (238 aa).

Helical transmembrane passes span 35–55 (SNVIYAWFAMVLLIILGTLAT), 61–81 (VPSGLQNFFEVVVGGLESFVV), 94–114 (FLCALFLFIITGNLIGLVPGL), 128–148 (ALTVFAYYNFWGIRMWGAGYI), 151–171 (FMGPFWWLVPLMLPIEIISHL), 190–210 (IVLVLLFALAPVVGTFPMYFL), and 211–231 (FSLADCIQAFVFFMLAMIYLK).

It belongs to the ATPase A chain family. F-type ATPases have 2 components, CF(1) - the catalytic core - and CF(0) - the membrane proton channel. CF(1) has five subunits: alpha(3), beta(3), gamma(1), delta(1), epsilon(1). CF(0) has three main subunits: a(1), b(2) and c(9-12). The alpha and beta chains form an alternating ring which encloses part of the gamma chain. CF(1) is attached to CF(0) by a central stalk formed by the gamma and epsilon chains, while a peripheral stalk is formed by the delta and b chains.

It localises to the cell inner membrane. Key component of the proton channel; it plays a direct role in the translocation of protons across the membrane. This is ATP synthase subunit a from Solidesulfovibrio magneticus (strain ATCC 700980 / DSM 13731 / RS-1) (Desulfovibrio magneticus).